We begin with the raw amino-acid sequence, 583 residues long: Proline--tRNA ligase (583 aa).

The protein belongs to the class-II aminoacyl-tRNA synthetase family. ProS type 1 subfamily. Homodimer.

Its subcellular location is the cytoplasm. The enzyme catalyses tRNA(Pro) + L-proline + ATP = L-prolyl-tRNA(Pro) + AMP + diphosphate. Catalyzes the attachment of proline to tRNA(Pro) in a two-step reaction: proline is first activated by ATP to form Pro-AMP and then transferred to the acceptor end of tRNA(Pro). As ProRS can inadvertently accommodate and process non-cognate amino acids such as alanine and cysteine, to avoid such errors it has two additional distinct editing activities against alanine. One activity is designated as 'pretransfer' editing and involves the tRNA(Pro)-independent hydrolysis of activated Ala-AMP. The other activity is designated 'posttransfer' editing and involves deacylation of mischarged Ala-tRNA(Pro). The misacylated Cys-tRNA(Pro) is not edited by ProRS. In Acidothermus cellulolyticus (strain ATCC 43068 / DSM 8971 / 11B), this protein is Proline--tRNA ligase.